We begin with the raw amino-acid sequence, 412 residues long: Adenosine receptor A2a (412 aa).

The Extracellular segment spans residues 1–7 (MPTVGSL). Residues 8–32 (VYIMVELAIALLAILGNMLVCWAVW) form a helical membrane-spanning segment. Over 33 to 42 (LNSNLQNVTN) the chain is Cytoplasmic. A helical membrane pass occupies residues 43–66 (YFVVSLAAADIAVGVLAIPFAITI). Residues 67-77 (STGFCAACHGC) are Extracellular-facing. Disulfide bonds link Cys71–Cys159, Cys74–Cys146, and Cys77–Cys166. A helical transmembrane segment spans residues 78–100 (LFIACFVLVLTQSSIFSLLAIAI). Topologically, residues 101 to 120 (DRYIAIRIPLRYNGLVTGTR) are cytoplasmic. A helical transmembrane segment spans residues 121 to 143 (AKGVIAVCWVLSFAIGLTPMLGW). The Extracellular portion of the chain corresponds to 144-173 (NNCHHWGEGENQSQGCGEGQVACLFEDVVP). Asn154 carries an N-linked (GlcNAc...) asparagine glycan. Position 169 (Glu169) interacts with adenosine. A helical membrane pass occupies residues 174 to 198 (MNYMVYYNFFACVLVPLLLMLGVYL). Topologically, residues 199–234 (RIFLAARRQLKQMETQPLPGERARSTLQKEVHAAKS) are cytoplasmic. The helical transmembrane segment at 235-258 (LAIIVGLFALCWLPLHIINCFTFF) threads the bilayer. Asn253 is a binding site for adenosine. A disulfide bridge connects residues Cys259 and Cys262. The Extracellular portion of the chain corresponds to 259–266 (CPECPHAP). A helical transmembrane segment spans residues 267 to 290 (LWLMYPAIILSHFNSVVNPFIYAY). 2 residues coordinate adenosine: Ser277 and His278. The Cytoplasmic portion of the chain corresponds to 291 to 412 (RIREFRHTFH…PLAQDGAGVS (122 aa)). Residues 368 to 412 (RASARESPGDTGLPDVELLSHELHGASPESPGLEGPLAQDGAGVS) are disordered.

This sequence belongs to the G-protein coupled receptor 1 family. In terms of assembly, interacts (via cytoplasmic C-terminal domain) with USP4; the interaction is direct. May interact with DRD4. Interacts with NECAB2. Interacts (via cytoplasmic C-terminal domain) with GAS2L2; interaction enhances receptor-mediated adenylyl cyclase activity. Ubiquitinated. Deubiquitinated by USP4; leading to stabilization and expression at the cell surface.

The protein resides in the cell membrane. Its function is as follows. Receptor for adenosine. The activity of this receptor is mediated by G proteins which activate adenylyl cyclase. The sequence is that of Adenosine receptor A2a (ADORA2A) from Equus caballus (Horse).